Here is a 184-residue protein sequence, read N- to C-terminus: Peptide deformylase (184 aa).

Residues Cys92 and His134 each coordinate Fe cation. The active site involves Glu135. Position 138 (His138) interacts with Fe cation.

Belongs to the polypeptide deformylase family. Fe(2+) serves as cofactor.

The catalysed reaction is N-terminal N-formyl-L-methionyl-[peptide] + H2O = N-terminal L-methionyl-[peptide] + formate. Its function is as follows. Removes the formyl group from the N-terminal Met of newly synthesized proteins. Requires at least a dipeptide for an efficient rate of reaction. N-terminal L-methionine is a prerequisite for activity but the enzyme has broad specificity at other positions. This is Peptide deformylase from Psychrobacter cryohalolentis (strain ATCC BAA-1226 / DSM 17306 / VKM B-2378 / K5).